The sequence spans 230 residues: ATP synthase subunit a (230 aa).

5 consecutive transmembrane segments (helical) span residues 17–37, 78–98, 107–127, 165–187, and 198–218; these read LPIT…FIMA, IFPF…IGVI, DLSV…WFGI, LFGN…GFLV, and EAII…AGGI.

The protein belongs to the ATPase A chain family. In terms of assembly, F-type ATPases have 2 components, CF(1) - the catalytic core - and CF(0) - the membrane proton channel. CF(1) has five subunits: alpha(3), beta(3), gamma(1), delta(1), epsilon(1). CF(0) has three main subunits: a(1), b(2) and c(9-12). The alpha and beta chains form an alternating ring which encloses part of the gamma chain. CF(1) is attached to CF(0) by a central stalk formed by the gamma and epsilon chains, while a peripheral stalk is formed by the delta and b chains.

It localises to the cell inner membrane. Functionally, key component of the proton channel; it plays a direct role in the translocation of protons across the membrane. This Legionella pneumophila subsp. pneumophila (strain Philadelphia 1 / ATCC 33152 / DSM 7513) protein is ATP synthase subunit a.